Here is a 335-residue protein sequence, read N- to C-terminus: Phospho-N-acetylmuramoyl-pentapeptide-transferase (335 aa).

Transmembrane regions (helical) follow at residues 3 to 23 (LTIL…PHFI), 53 to 73 (GGTV…LVYF), 78 to 98 (SLGL…IGFL), 118 to 138 (FTFQ…PSGI), 143 to 163 (VFGY…FWVV), 174 to 194 (GIDG…GVIA), 200 to 220 (FDVL…FLFN), 226 to 246 (IFMG…ISIA), 251 to 271 (WTLL…MLQV), and 314 to 334 (VDAF…AILY).

It belongs to the glycosyltransferase 4 family. MraY subfamily. It depends on Mg(2+) as a cofactor.

It is found in the cell membrane. The catalysed reaction is UDP-N-acetyl-alpha-D-muramoyl-L-alanyl-gamma-D-glutamyl-L-lysyl-D-alanyl-D-alanine + di-trans,octa-cis-undecaprenyl phosphate = Mur2Ac(oyl-L-Ala-gamma-D-Glu-L-Lys-D-Ala-D-Ala)-di-trans,octa-cis-undecaprenyl diphosphate + UMP. The protein operates within cell wall biogenesis; peptidoglycan biosynthesis. Functionally, catalyzes the initial step of the lipid cycle reactions in the biosynthesis of the cell wall peptidoglycan: transfers peptidoglycan precursor phospho-MurNAc-pentapeptide from UDP-MurNAc-pentapeptide onto the lipid carrier undecaprenyl phosphate, yielding undecaprenyl-pyrophosphoryl-MurNAc-pentapeptide, known as lipid I. This is Phospho-N-acetylmuramoyl-pentapeptide-transferase from Streptococcus equi subsp. equi (strain 4047).